Here is a 296-residue protein sequence, read N- to C-terminus: Pantothenate synthetase (296 aa).

An ATP-binding site is contributed by 31–38 (MGYLHEGH). The active-site Proton donor is His-38. Gln-62 contacts (R)-pantoate. Gln-62 serves as a coordination point for beta-alanine. 148–151 (GEKD) contacts ATP. Gln-154 contacts (R)-pantoate. Residues Val-177 and 185–188 (LSSR) each bind ATP.

The protein belongs to the pantothenate synthetase family. As to quaternary structure, homodimer.

It is found in the cytoplasm. The catalysed reaction is (R)-pantoate + beta-alanine + ATP = (R)-pantothenate + AMP + diphosphate + H(+). The protein operates within cofactor biosynthesis; (R)-pantothenate biosynthesis; (R)-pantothenate from (R)-pantoate and beta-alanine: step 1/1. Catalyzes the condensation of pantoate with beta-alanine in an ATP-dependent reaction via a pantoyl-adenylate intermediate. The sequence is that of Pantothenate synthetase from Deinococcus geothermalis (strain DSM 11300 / CIP 105573 / AG-3a).